The primary structure comprises 280 residues: Lysosome-associated membrane glycoprotein 5 (280 aa).

The first 29 residues, Met1–Ala29, serve as a signal peptide directing secretion. The Extracellular portion of the chain corresponds to Glu30–Glu235. N-linked (GlcNAc...) asparagine glycosylation is found at Asn35, Asn53, Asn102, and Asn127. Residues Thr236 to Tyr256 form a helical membrane-spanning segment. At His257–Gly280 the chain is on the cytoplasmic side.

The protein belongs to the LAMP family. Post-translationally, glycosylated. In terms of tissue distribution, in brain, strongly expressed in the globus pallidus/ventral pallidum complex, the substantia nigra pars reticulata and the entopeduncular nucleus (at protein level). Expressed in the external plexiform layer of the olfactory bulb (at protein level). May be weakly expressed in neocortex and striatum (at protein level). Highly expressed in brain; not detected in other tissues tested. Detected in the cingulate cortex, cortical plate and caudate putamen. In neocortex, specifically expressed in neurons of layers II/III and V.

It localises to the cytoplasmic vesicle membrane. Its subcellular location is the cell membrane. It is found in the cell projection. The protein resides in the dendrite. The protein localises to the cytoplasmic vesicle. It localises to the secretory vesicle. Its subcellular location is the synaptic vesicle membrane. It is found in the growth cone membrane. The protein resides in the early endosome membrane. The protein localises to the recycling endosome. It localises to the endoplasmic reticulum-Golgi intermediate compartment membrane. Its subcellular location is the endosome membrane. Its function is as follows. Plays a role in short-term synaptic plasticity in a subset of GABAergic neurons in the brain. This chain is Lysosome-associated membrane glycoprotein 5 (Lamp5), found in Mus musculus (Mouse).